The following is a 192-amino-acid chain: Ion-translocating oxidoreductase complex subunit A (192 aa).

6 helical membrane-spanning segments follow: residues 5–25 (LLLL…FLGL), 39–59 (IGMS…SYLV), 65–85 (LPFE…AVVV), 102–122 (ALGI…VALL), 134–154 (AIYG…FSAM), and 171–191 (AIAM…TGLV).

The protein belongs to the NqrDE/RnfAE family. The complex is composed of six subunits: RnfA, RnfB, RnfC, RnfD, RnfE and RnfG.

It is found in the cell inner membrane. Part of a membrane-bound complex that couples electron transfer with translocation of ions across the membrane. The chain is Ion-translocating oxidoreductase complex subunit A from Shewanella sediminis (strain HAW-EB3).